We begin with the raw amino-acid sequence, 156 residues long: Ribosomal RNA large subunit methyltransferase H (156 aa).

S-adenosyl-L-methionine-binding positions include Leu-73, Gly-104, and 123–128 (LSSLTL).

It belongs to the RNA methyltransferase RlmH family. As to quaternary structure, homodimer.

It is found in the cytoplasm. The enzyme catalyses pseudouridine(1915) in 23S rRNA + S-adenosyl-L-methionine = N(3)-methylpseudouridine(1915) in 23S rRNA + S-adenosyl-L-homocysteine + H(+). In terms of biological role, specifically methylates the pseudouridine at position 1915 (m3Psi1915) in 23S rRNA. This Ralstonia nicotianae (strain ATCC BAA-1114 / GMI1000) (Ralstonia solanacearum) protein is Ribosomal RNA large subunit methyltransferase H.